Consider the following 630-residue polypeptide: tRNA uridine 5-carboxymethylaminomethyl modification enzyme MnmG (630 aa).

An FAD-binding site is contributed by 13-18; the sequence is GGGHAG. Residue 273–287 coordinates NAD(+); the sequence is GPRYCPSIEDKVMRF.

This sequence belongs to the MnmG family. Homodimer. Heterotetramer of two MnmE and two MnmG subunits. It depends on FAD as a cofactor.

The protein resides in the cytoplasm. Its function is as follows. NAD-binding protein involved in the addition of a carboxymethylaminomethyl (cmnm) group at the wobble position (U34) of certain tRNAs, forming tRNA-cmnm(5)s(2)U34. The chain is tRNA uridine 5-carboxymethylaminomethyl modification enzyme MnmG from Actinobacillus pleuropneumoniae serotype 7 (strain AP76).